A 217-amino-acid polypeptide reads, in one-letter code: Dense granule protein 1 (217 aa).

A signal peptide spans 1–19 (MARQATFIVALCVCGLAIA). Residues 171 to 183 (VASEDSALGNSEE) are compositionally biased toward polar residues. A disordered region spans residues 171 to 217 (VASEDSALGNSEEQYVEGTVNGSSDPEQERAGGPLIPEGDEQEVDTE). Asn-191 is a glycosylation site (N-linked (GlcNAc...) asparagine). Positions 208-217 (EGDEQEVDTE) are enriched in acidic residues.

This sequence belongs to the Gra7 family.

It localises to the secreted. This Neospora caninum (Coccidian parasite) protein is Dense granule protein 1 (DG1).